Here is a 3582-residue protein sequence, read N- to C-terminus: Ubiquitin carboxyl-terminal hydrolase 34 (3582 aa).

Phosphoserine occurs at positions 352, 486, 487, and 490. Disordered stretches follow at residues 503-533 (EEEE…HQSG), 551-670 (QQRL…ELRN), 682-705 (GESQ…VFNT), 775-801 (HHHH…DGHM), and 1496-1515 (TGSY…DQVE). Low complexity predominate over residues 510–524 (AAPSPWSPAASPQSS). A compositionally biased stretch (polar residues) spans 560–570 (SMQGSSDETAN). The segment covering 571-590 (SGEDGSSGPGSSSGHSDGSS) has biased composition (low complexity). Over residues 591 to 609 (NEVNSSHASQSAGSPGSEV) the composition is skewed to polar residues. Residues 610–653 (QSEDIADIEALKEEEEEEEEEEEEEEEEDDEEEEDEEEDDDDDD) show a composition bias toward acidic residues. A compositionally biased stretch (polar residues) spans 684–697 (SQGTSERNGTNSGT). Over residues 775–798 (HHHHHHHHHHHHHHHHHHHHHHHD) the composition is skewed to basic residues. The segment covering 1504–1514 (PDSDDSSEDQV) has biased composition (acidic residues). Phosphoserine is present on Ser-1506. The USP domain occupies 1931–2276 (VGLTNLGATC…SAYMLFYKRM (346 aa)). Cys-1940 functions as the Nucleophile in the catalytic mechanism. His-2201 acts as the Proton acceptor in catalysis. A Phosphoserine modification is found at Ser-2525. The segment at 3369–3484 (SLQEQEAKER…QSNNGRFDDC (116 aa)) is disordered. A compositionally biased stretch (basic and acidic residues) spans 3373-3384 (QEAKERKTKDDE). Ser-3395 and Ser-3396 each carry phosphoserine. Residue Thr-3418 is modified to Phosphothreonine. 2 positions are modified to phosphoserine: Ser-3423 and Ser-3443. Residues 3463–3484 (DGSHIRSQHAEEQSNNGRFDDC) are compositionally biased toward basic and acidic residues. A Phosphoserine modification is found at Ser-3539.

Belongs to the peptidase C19 family. As to quaternary structure, interacts with AXIN1 and AXIN2.

It carries out the reaction Thiol-dependent hydrolysis of ester, thioester, amide, peptide and isopeptide bonds formed by the C-terminal Gly of ubiquitin (a 76-residue protein attached to proteins as an intracellular targeting signal).. In terms of biological role, ubiquitin hydrolase that can remove conjugated ubiquitin from AXIN1 and AXIN2, thereby acting as a regulator of Wnt signaling pathway. Acts as an activator of the Wnt signaling pathway downstream of the beta-catenin destruction complex by deubiquitinating and stabilizing AXIN1 and AXIN2, leading to promote nuclear accumulation of AXIN1 and AXIN2 and positively regulate beta-catenin (CTNBB1)-mediated transcription. Recognizes and hydrolyzes the peptide bond at the C-terminal Gly of ubiquitin. Involved in the processing of poly-ubiquitin precursors as well as that of ubiquitinated proteins. The protein is Ubiquitin carboxyl-terminal hydrolase 34 (Usp34) of Mus musculus (Mouse).